The sequence spans 766 residues: DENN domain-containing protein 1B (766 aa).

Residues 14–143 (DLVLKVKCHA…YNHPVPKANT (130 aa)) enclose the uDENN domain. One can recognise a cDENN domain in the interval 160-296 (GLPTIPESRN…VVSALKNKLK (137 aa)). The region spanning 298-375 (QSTATGDGVA…DGRLAKLNAG (78 aa)) is the dDENN domain. An FXDXF motif motif is present at residues 378–382 (FSDIF). The tract at residues 472 to 523 (NEKGENREKHKLSQTHLKRPHKSLDGTLYDDDDDDDDIERASKISSEDGEET) is disordered. The segment covering 480-492 (KHKLSQTHLKRPH) has biased composition (basic residues). The segment covering 499 to 509 (LYDDDDDDDDI) has biased composition (acidic residues). Tyr500 bears the Phosphotyrosine mark. Ser516, Ser517, Ser530, and Ser533 each carry phosphoserine. Residues 547–556 (DLLGEILDTL) carry the Clathrin box motif. Disordered stretches follow at residues 611–634 (LGQD…VSSG) and 652–732 (LCAD…KPSK). Residues Ser632 and Ser633 each carry the phosphoserine modification. Residues 694 to 704 (TPGQAPLQSED) are compositionally biased toward polar residues. Residues 722–732 (KAGKEDTKPSK) are compositionally biased toward basic and acidic residues.

As to quaternary structure, interacts with RAB35. Interacts with clathrin heavy chain/CLTC. Interacts with components of the adapter protein complex 2 (AP-2) AP2A2 and AP2B1. Interacts with CD3E. Post-translationally, phosphorylated on serine and/or threonine, possibly regulating the guanine nucleotide exchange factor (GEF) activity. As to expression, expressed in a subset of dendritic cells (DCs).

The protein localises to the cytoplasm. It is found in the cytosol. Its subcellular location is the cytoplasmic vesicle. It localises to the clathrin-coated vesicle. Guanine nucleotide exchange factor (GEF) for RAB35 that acts as a regulator of T-cell receptor (TCR) internalization in TH2 cells. Acts by promoting the exchange of GDP to GTP, converting inactive GDP-bound RAB35 into its active GTP-bound form. Plays a role in clathrin-mediated endocytosis. Controls cytokine production in TH2 lymphocytes by controlling the rate of TCR internalization and routing to endosomes: acts by mediating clathrin-mediated endocytosis of TCR via its interaction with the adapter protein complex 2 (AP-2) and GEF activity. Dysregulation leads to impaired TCR down-modulation and recycling, affecting cytokine production in TH2 cells. The chain is DENN domain-containing protein 1B from Mus musculus (Mouse).